Here is a 65-residue protein sequence, read N- to C-terminus: Large ribosomal subunit protein bL35 (65 aa).

Over residues 1–15 (MPKLKTRKAAAKRFR) the composition is skewed to basic residues. Positions 1–28 (MPKLKTRKAAAKRFRQTGTGKFTRRKAN) are disordered.

This sequence belongs to the bacterial ribosomal protein bL35 family.

This chain is Large ribosomal subunit protein bL35, found in Cyanothece sp. (strain PCC 7425 / ATCC 29141).